The sequence spans 557 residues: Glutathione hydrolase proenzyme (557 aa).

The N-terminal stretch at 1-24 is a signal peptide; the sequence is MQPVLFRTLSLGVAIAAASSSAFA. An L-glutamate-binding site is contributed by Arg-94. The active-site Nucleophile is Thr-364. Residues Thr-382, Asn-384, Glu-403, Asp-406, 435-436, and 456-457 contribute to the L-glutamate site; these read SS and GG.

Belongs to the gamma-glutamyltransferase family. As to quaternary structure, this enzyme consists of two polypeptide chains, which are synthesized in precursor form from a single polypeptide. Cleaved by autocatalysis into a large and a small subunit.

The protein resides in the periplasm. The catalysed reaction is an N-terminal (5-L-glutamyl)-[peptide] + an alpha-amino acid = 5-L-glutamyl amino acid + an N-terminal L-alpha-aminoacyl-[peptide]. It catalyses the reaction glutathione + H2O = L-cysteinylglycine + L-glutamate. The enzyme catalyses an S-substituted glutathione + H2O = an S-substituted L-cysteinylglycine + L-glutamate. Its pathway is sulfur metabolism; glutathione metabolism. In Pseudomonas aeruginosa (strain ATCC 15692 / DSM 22644 / CIP 104116 / JCM 14847 / LMG 12228 / 1C / PRS 101 / PAO1), this protein is Glutathione hydrolase proenzyme (ggt).